The primary structure comprises 239 residues: RNA polymerase sigma-35 factor (239 aa).

Positions 1-27 (MMKLKFYLVYLWYKVLLKLGIKTDEIY) are excised as a propeptide. Positions 86–99 (DLISIGTIGLIKAV) match the Polymerase core binding motif. The segment at residues 206–225 (QKDVADMLGISQSYISRLEK) is a DNA-binding region (H-T-H motif).

This sequence belongs to the sigma-70 factor family. In terms of processing, proteolytically cleaved in the N-terminus probably by a SpoIIGA homolog to yield the active peptide.

Its function is as follows. Sigma factors are initiation factors that promote the attachment of RNA polymerase to specific initiation sites and are then released. This sigma factor directs the transcription of crystal protein genes, a sporulation-regulated event. This Bacillus anthracis protein is RNA polymerase sigma-35 factor (sigE).